Reading from the N-terminus, the 346-residue chain is Holliday junction branch migration complex subunit RuvB (346 aa).

Positions 1 to 182 (MSEPARLISP…FGIPVRLTFY (182 aa)) are large ATPase domain (RuvB-L). Residues Leu-21, Arg-22, Gly-63, Lys-66, Thr-67, Thr-68, 129–131 (EDY), Arg-172, Tyr-182, and Arg-219 each bind ATP. Thr-67 serves as a coordination point for Mg(2+). Residues 183 to 253 (TVEELELIVR…IADEALTRLL (71 aa)) form a small ATPAse domain (RuvB-S) region. The interval 256 to 346 (NVGFDQLDKR…AQFRLFQEDD (91 aa)) is head domain (RuvB-H). DNA contacts are provided by Arg-292, Arg-311, and Arg-316.

The protein belongs to the RuvB family. In terms of assembly, homohexamer. Forms an RuvA(8)-RuvB(12)-Holliday junction (HJ) complex. HJ DNA is sandwiched between 2 RuvA tetramers; dsDNA enters through RuvA and exits via RuvB. An RuvB hexamer assembles on each DNA strand where it exits the tetramer. Each RuvB hexamer is contacted by two RuvA subunits (via domain III) on 2 adjacent RuvB subunits; this complex drives branch migration. In the full resolvosome a probable DNA-RuvA(4)-RuvB(12)-RuvC(2) complex forms which resolves the HJ.

The protein resides in the cytoplasm. The enzyme catalyses ATP + H2O = ADP + phosphate + H(+). The RuvA-RuvB-RuvC complex processes Holliday junction (HJ) DNA during genetic recombination and DNA repair, while the RuvA-RuvB complex plays an important role in the rescue of blocked DNA replication forks via replication fork reversal (RFR). RuvA specifically binds to HJ cruciform DNA, conferring on it an open structure. The RuvB hexamer acts as an ATP-dependent pump, pulling dsDNA into and through the RuvAB complex. RuvB forms 2 homohexamers on either side of HJ DNA bound by 1 or 2 RuvA tetramers; 4 subunits per hexamer contact DNA at a time. Coordinated motions by a converter formed by DNA-disengaged RuvB subunits stimulates ATP hydrolysis and nucleotide exchange. Immobilization of the converter enables RuvB to convert the ATP-contained energy into a lever motion, pulling 2 nucleotides of DNA out of the RuvA tetramer per ATP hydrolyzed, thus driving DNA branch migration. The RuvB motors rotate together with the DNA substrate, which together with the progressing nucleotide cycle form the mechanistic basis for DNA recombination by continuous HJ branch migration. Branch migration allows RuvC to scan DNA until it finds its consensus sequence, where it cleaves and resolves cruciform DNA. The chain is Holliday junction branch migration complex subunit RuvB from Rhizobium etli (strain ATCC 51251 / DSM 11541 / JCM 21823 / NBRC 15573 / CFN 42).